We begin with the raw amino-acid sequence, 140 residues long: Large ribosomal subunit protein bL17 (140 aa).

The protein belongs to the bacterial ribosomal protein bL17 family. In terms of assembly, part of the 50S ribosomal subunit. Contacts protein L32.

This chain is Large ribosomal subunit protein bL17, found in Gluconobacter oxydans (strain 621H) (Gluconobacter suboxydans).